Reading from the N-terminus, the 719-residue chain is Acyl-coenzyme A oxidase (719 aa).

The Microbody targeting signal motif lies at Ala-716–Ile-719.

The protein belongs to the acyl-CoA oxidase family. The cofactor is FAD.

The protein localises to the peroxisome. The enzyme catalyses a 2,3-saturated acyl-CoA + O2 = a (2E)-enoyl-CoA + H2O2. The protein operates within lipid metabolism; peroxisomal fatty acid beta-oxidation. The chain is Acyl-coenzyme A oxidase (POX1) from Komagataella pastoris (Yeast).